A 473-amino-acid polypeptide reads, in one-letter code: MATVAEQWVLVEMVQALYEAPAYHLILEGILILWIIRLVFSKTYKLQERSDLTAKEKEELIEEWQPEPLVPPVSKNHPALNYNIVSGPPTHNIVVNGKECVNFASFNFLGLLANPRVKATAFSSLKKYGVGTCGPRGFYGTFDVHLDLEERLAKFMKTEEAIIYSYGFSTIASAIPAYSKRGDIIFVDSAACFAIQKGLQASRSDIKLFKHNDVADLERLLKEQEIEDQKNPRKARVTRRFIVVEGLYMNTGTICPLPELVKLKYKYKARIFLEESLSFGVLGEHGRGVTEHYGISIDDIDLISANMENALASVGGFCCGRSFVVDHQRLSGQGYCFSASLPPLLAAAAIEALNIMEENPDIFAVLKKKCQNIHKSLQGVSGLKVVGESLSPALHLQLEESTGSREKDVKLLQAIVDQCMDKGIALTQARYLDKEEKCLPPPSIRVVVTVEQTEEELQRAASTIREAAQAVLL.

Residues 1–15 (MATVAEQWVLVEMVQ) lie on the Lumenal side of the membrane. An interaction with SPTLC2 region spans residues 1 to 66 (MATVAEQWVL…KEELIEEWQP (66 aa)). A helical transmembrane segment spans residues 16-36 (ALYEAPAYHLILEGILILWII). Over 37-473 (RLVFSKTYKL…IREAAQAVLL (437 aa)) the chain is Cytoplasmic. A Phosphotyrosine; by ABL modification is found at Tyr164.

Belongs to the class-II pyridoxal-phosphate-dependent aminotransferase family. In terms of assembly, component of the serine palmitoyltransferase (SPT) complex, which is also composed of SPTLC2 or SPTLC3 and SPTSSA or SPTSSB. The heterodimer with SPTLC2 or SPTLC3 forms the catalytic core of the enzyme, while SPTSSA or SPTSSB subunits determine substrate specificity. SPT also interacts with ORMDL proteins, especially ORMDL3, which negatively regulate SPT activity in the presence of ceramides. Forms dimers of heterodimers with SPTLC2. Interacts with RTN4 (isoform B). Pyridoxal 5'-phosphate serves as cofactor. Post-translationally, phosphorylation at Tyr-164 inhibits activity and promotes cell survival. As to expression, expressed in a variety of tissues. Highest expression in brain, kidney and liver. Expressed in brown and white adipose tissues.

It localises to the endoplasmic reticulum membrane. It catalyses the reaction L-serine + hexadecanoyl-CoA + H(+) = 3-oxosphinganine + CO2 + CoA. It carries out the reaction octadecanoyl-CoA + L-serine + H(+) = 3-oxoeicosasphinganine + CO2 + CoA. The enzyme catalyses tetradecanoyl-CoA + L-serine + H(+) = 3-oxohexadecasphinganine + CO2 + CoA. The catalysed reaction is dodecanoyl-CoA + L-serine + H(+) = 3-oxotetradecasphinganine + CO2 + CoA. Its pathway is lipid metabolism; sphingolipid metabolism. Its activity is regulated as follows. SPT complex catalytic activity is negatively regulated by ORMDL proteins, including ORMDL3, in the presence of ceramides. This mechanism allows to maintain ceramide levels at sufficient concentrations for the production of complex sphingolipids, but which prevents the accumulation of ceramides to levels that trigger apoptosis. In terms of biological role, component of the serine palmitoyltransferase multisubunit enzyme (SPT) that catalyzes the initial and rate-limiting step in sphingolipid biosynthesis by condensing L-serine and activated acyl-CoA (most commonly palmitoyl-CoA) to form long-chain bases. The SPT complex is also composed of SPTLC2 or SPTLC3 and SPTSSA or SPTSSB. Within this complex, the heterodimer with SPTLC2 or SPTLC3 forms the catalytic core. The composition of the serine palmitoyltransferase (SPT) complex determines the substrate preference. The SPTLC1-SPTLC2-SPTSSA complex shows a strong preference for C16-CoA substrate, while the SPTLC1-SPTLC3-SPTSSA isozyme uses both C14-CoA and C16-CoA as substrates, with a slight preference for C14-CoA. The SPTLC1-SPTLC2-SPTSSB complex shows a strong preference for C18-CoA substrate, while the SPTLC1-SPTLC3-SPTSSB isozyme displays an ability to use a broader range of acyl-CoAs, without apparent preference. Required for adipocyte cell viability and metabolic homeostasis. The polypeptide is Serine palmitoyltransferase 1 (Sptlc1) (Mus musculus (Mouse)).